Reading from the N-terminus, the 99-residue chain is Cell division protein FtsB (99 aa).

Over 1-3 (MKF) the chain is Cytoplasmic. The helical transmembrane segment at 4-21 (FVIALIVLLGLLQYRLWS) threads the bilayer. The Periplasmic portion of the chain corresponds to 22-99 (GSNSLPEYFV…GERSVSSPSQ (78 aa)). Residues 36 to 73 (IAVQQEGNDKLNERNQVLKEEIIDLKSGTEAIEERARN) adopt a coiled-coil conformation.

Belongs to the FtsB family. As to quaternary structure, part of a complex composed of FtsB, FtsL and FtsQ.

Its subcellular location is the cell inner membrane. Essential cell division protein. May link together the upstream cell division proteins, which are predominantly cytoplasmic, with the downstream cell division proteins, which are predominantly periplasmic. In Shewanella sp. (strain W3-18-1), this protein is Cell division protein FtsB.